The following is a 311-amino-acid chain: HPr kinase/phosphorylase (311 aa).

Active-site residues include H138 and K159. 153-160 (GDSGIGKS) provides a ligand contact to ATP. S160 contacts Mg(2+). D177 (proton acceptor; for phosphorylation activity. Proton donor; for dephosphorylation activity) is an active-site residue. The important for the catalytic mechanism of both phosphorylation and dephosphorylation stretch occupies residues 201 to 210 (LEIRGVGIID). E202 lines the Mg(2+) pocket. R243 is an active-site residue. Residues 264–269 (PVKTGR) are important for the catalytic mechanism of dephosphorylation.

It belongs to the HPrK/P family. As to quaternary structure, homohexamer. Mg(2+) serves as cofactor.

The enzyme catalyses [HPr protein]-L-serine + ATP = [HPr protein]-O-phospho-L-serine + ADP + H(+). It catalyses the reaction [HPr protein]-O-phospho-L-serine + phosphate + H(+) = [HPr protein]-L-serine + diphosphate. In terms of biological role, catalyzes the ATP- as well as the pyrophosphate-dependent phosphorylation of a specific serine residue in HPr, a phosphocarrier protein of the phosphoenolpyruvate-dependent sugar phosphotransferase system (PTS). HprK/P also catalyzes the pyrophosphate-producing, inorganic phosphate-dependent dephosphorylation (phosphorolysis) of seryl-phosphorylated HPr (P-Ser-HPr). The two antagonistic activities of HprK/P are regulated by several intracellular metabolites, which change their concentration in response to the absence or presence of rapidly metabolisable carbon sources (glucose, fructose, etc.) in the growth medium. Therefore, by controlling the phosphorylation state of HPr, HPrK/P is a sensor enzyme that plays a major role in the regulation of carbon metabolism and sugar transport: it mediates carbon catabolite repression (CCR), and regulates PTS-catalyzed carbohydrate uptake and inducer exclusion. This Streptococcus sanguinis (strain SK36) protein is HPr kinase/phosphorylase.